Reading from the N-terminus, the 239-residue chain is Ribosomal RNA small subunit methyltransferase G (239 aa).

S-adenosyl-L-methionine is bound by residues G77, F82, 128 to 129, and R147; that span reads AE. Residues 219-239 form a disordered region; sequence RKTPKKYPRKPGTPNKLPIEK.

It belongs to the methyltransferase superfamily. RNA methyltransferase RsmG family.

It is found in the cytoplasm. Functionally, specifically methylates the N7 position of guanine in position 535 of 16S rRNA. This chain is Ribosomal RNA small subunit methyltransferase G, found in Bacillus cytotoxicus (strain DSM 22905 / CIP 110041 / 391-98 / NVH 391-98).